Consider the following 96-residue polypeptide: Large ribosomal subunit protein uL23 (96 aa).

Belongs to the universal ribosomal protein uL23 family. Part of the 50S ribosomal subunit. Contacts protein L29, and trigger factor when it is bound to the ribosome.

Functionally, one of the early assembly proteins it binds 23S rRNA. One of the proteins that surrounds the polypeptide exit tunnel on the outside of the ribosome. Forms the main docking site for trigger factor binding to the ribosome. The chain is Large ribosomal subunit protein uL23 from Caldanaerobacter subterraneus subsp. tengcongensis (strain DSM 15242 / JCM 11007 / NBRC 100824 / MB4) (Thermoanaerobacter tengcongensis).